Reading from the N-terminus, the 219-residue chain is MAKTWIYAASAAAIGGALIGGWLLDPAPPEASPQARQSPAAQAAAAPTAALAAPAADATRMLAPTPVTTPAPRERVTLWQGELRSREGAQGIPEYLAQVEPALLDTLALGQVLEMSLPGRERPLQARLASTHNSAGLPVWRGGLVDGDEAESLTVVRGSLETHINVATLDGSYSIIVDNRSGKTRVIDENDIAARSDPHGDHVDAPLAELPPMPPPAQG.

A helical membrane pass occupies residues threonine 4–leucine 24. Positions aspartate 191–aspartate 204 are enriched in basic and acidic residues. The segment at aspartate 191–glycine 219 is disordered. The span at glutamate 209 to glycine 219 shows a compositional bias: pro residues.

Its subcellular location is the cell membrane. Its function is as follows. Inhibitor of the metalloendopeptidase Mep72. Forms a protein-protein complex with the protease, which is the product of its coregulated adjacent gene, and probably prevents premature protease activity until the protein has been secreted. This is Biofilm-associated metzincin protease inhibitor from Pseudomonas aeruginosa (strain ATCC 15692 / DSM 22644 / CIP 104116 / JCM 14847 / LMG 12228 / 1C / PRS 101 / PAO1).